Reading from the N-terminus, the 467-residue chain is Ethanolamine ammonia-lyase reactivase EutA (467 aa).

Belongs to the EutA family.

The protein localises to the bacterial microcompartment. The protein operates within amine and polyamine degradation; ethanolamine degradation. Functionally, reactivates suicidally inhibited ethanolamine ammonia-lyase (EAL), cyanocobalamin-inactivated EAL and O(2)-inactivated EAL; requires Mg(2+), ATP and adenosylcobalamin. Reactivation probably occurs by the ATP-dependent exchange of cobalamin. Protects EAL from inhibition by CN-B12, does not have adenosylation activity. Expression of the eut operon allows this bacteria to use ethanolamine as a carbon, nitrogen and energy source. It relies on cobalamin (vitamin B12) both as a cofactor for the ethanolamine ammonia-lyase (EAL) activity and to induce the operon. EA enhances bacterial survival in macrophages in a concentration-dependent manner, suggesting it is an important nutrient during infection. This chain is Ethanolamine ammonia-lyase reactivase EutA, found in Salmonella typhimurium (strain LT2 / SGSC1412 / ATCC 700720).